Here is a 103-residue protein sequence, read N- to C-terminus: Phosphoribosyl-ATP pyrophosphatase (103 aa).

The interval 84 to 103 is disordered; it reads LQSREGKLSKTSDRKEINDL.

The protein belongs to the PRA-PH family.

The protein localises to the cytoplasm. It carries out the reaction 1-(5-phospho-beta-D-ribosyl)-ATP + H2O = 1-(5-phospho-beta-D-ribosyl)-5'-AMP + diphosphate + H(+). Its pathway is amino-acid biosynthesis; L-histidine biosynthesis; L-histidine from 5-phospho-alpha-D-ribose 1-diphosphate: step 2/9. The sequence is that of Phosphoribosyl-ATP pyrophosphatase (hisE) from Listeria innocua serovar 6a (strain ATCC BAA-680 / CLIP 11262).